We begin with the raw amino-acid sequence, 462 residues long: Putative F-box protein At1g12855 (462 aa).

Over residues 1 to 22 (MESREDSFISKEKKSTMKKEKQ) the composition is skewed to basic and acidic residues. Positions 1–59 (MESREDSFISKEKKSTMKKEKQAIASQRNRRRVIKNRGNGKRLIASLSQRKRRRIPRGR) are disordered. Residues 28–40 (RNRRRVIKNRGNG) show a composition bias toward basic residues. Residues 65 to 110 (VFAPSSLPNDVVEEIFLRLPVKAIIQLKSLSKQWRSTIESRSFEER) form the F-box domain.

This is Putative F-box protein At1g12855 from Arabidopsis thaliana (Mouse-ear cress).